The chain runs to 189 residues: Protein GrpE (189 aa).

Residues 1 to 37 (MSDSSKEKKKKFADMVSRQKGDDQQSDNHKQTDDLNE) form a disordered region. Positions 17-33 (SRQKGDDQQSDNHKQTD) are enriched in basic and acidic residues.

The protein belongs to the GrpE family. As to quaternary structure, homodimer.

The protein resides in the cytoplasm. Functionally, participates actively in the response to hyperosmotic and heat shock by preventing the aggregation of stress-denatured proteins, in association with DnaK and GrpE. It is the nucleotide exchange factor for DnaK and may function as a thermosensor. Unfolded proteins bind initially to DnaJ; upon interaction with the DnaJ-bound protein, DnaK hydrolyzes its bound ATP, resulting in the formation of a stable complex. GrpE releases ADP from DnaK; ATP binding to DnaK triggers the release of the substrate protein, thus completing the reaction cycle. Several rounds of ATP-dependent interactions between DnaJ, DnaK and GrpE are required for fully efficient folding. The chain is Protein GrpE from Wolbachia pipientis wMel.